A 238-amino-acid polypeptide reads, in one-letter code: 7-cyano-7-deazaguanine synthase (238 aa).

14–24 is an ATP binding site; the sequence is FSGGQDSATCL. Positions 202, 217, 220, and 223 each coordinate Zn(2+).

It belongs to the QueC family. It depends on Zn(2+) as a cofactor.

It catalyses the reaction 7-carboxy-7-deazaguanine + NH4(+) + ATP = 7-cyano-7-deazaguanine + ADP + phosphate + H2O + H(+). Its pathway is purine metabolism; 7-cyano-7-deazaguanine biosynthesis. Its function is as follows. Catalyzes the ATP-dependent conversion of 7-carboxy-7-deazaguanine (CDG) to 7-cyano-7-deazaguanine (preQ(0)). This Nitrobacter winogradskyi (strain ATCC 25391 / DSM 10237 / CIP 104748 / NCIMB 11846 / Nb-255) protein is 7-cyano-7-deazaguanine synthase.